The following is a 468-amino-acid chain: 3-isopropylmalate dehydratase large subunit (468 aa).

Positions 347, 407, and 410 each coordinate [4Fe-4S] cluster. A compositionally biased stretch (polar residues) spans 424–441; that stretch reads SASSSNRNFKGRQGSPSG. The interval 424 to 443 is disordered; sequence SASSSNRNFKGRQGSPSGRT.

The protein belongs to the aconitase/IPM isomerase family. LeuC type 1 subfamily. In terms of assembly, heterodimer of LeuC and LeuD. Requires [4Fe-4S] cluster as cofactor.

The catalysed reaction is (2R,3S)-3-isopropylmalate = (2S)-2-isopropylmalate. It functions in the pathway amino-acid biosynthesis; L-leucine biosynthesis; L-leucine from 3-methyl-2-oxobutanoate: step 2/4. Its function is as follows. Catalyzes the isomerization between 2-isopropylmalate and 3-isopropylmalate, via the formation of 2-isopropylmaleate. This Prochlorococcus marinus (strain MIT 9215) protein is 3-isopropylmalate dehydratase large subunit.